The following is a 183-amino-acid chain: uncharacterized protein (183 aa).

The GGDEF domain maps to 55–183; the sequence is PRAAVLLVDL…RSRRGSRPAR (129 aa).

In terms of biological role, might be involved in pSAM2 replication control. This is an uncharacterized protein from Streptomyces ambofaciens.